The sequence spans 161 residues: uncharacterized protein (161 aa).

It belongs to the sapovirus VP3 family.

This is an uncharacterized protein from Sapporo virus (isolate GI/Human/Germany/pJG-Sap01) (Hu/Dresden/pJG-Sap01/DE).